The sequence spans 330 residues: 4-hydroxythreonine-4-phosphate dehydrogenase (330 aa).

His135 and Thr136 together coordinate substrate. The a divalent metal cation site is built by His165, His210, and His266. 3 residues coordinate substrate: Lys274, Asn283, and Arg292.

Belongs to the PdxA family. In terms of assembly, homodimer. It depends on Zn(2+) as a cofactor. Requires Mg(2+) as cofactor. The cofactor is Co(2+).

Its subcellular location is the cytoplasm. It carries out the reaction 4-(phosphooxy)-L-threonine + NAD(+) = 3-amino-2-oxopropyl phosphate + CO2 + NADH. Its pathway is cofactor biosynthesis; pyridoxine 5'-phosphate biosynthesis; pyridoxine 5'-phosphate from D-erythrose 4-phosphate: step 4/5. Functionally, catalyzes the NAD(P)-dependent oxidation of 4-(phosphooxy)-L-threonine (HTP) into 2-amino-3-oxo-4-(phosphooxy)butyric acid which spontaneously decarboxylates to form 3-amino-2-oxopropyl phosphate (AHAP). The protein is 4-hydroxythreonine-4-phosphate dehydrogenase of Vibrio cholerae serotype O1 (strain ATCC 39315 / El Tor Inaba N16961).